A 907-amino-acid chain; its full sequence is DNA (cytosine-5)-methyltransferase CMT3 (907 aa).

Residues M1–T15 are compositionally biased toward low complexity. A disordered region spans residues M1 to E154. Over residues A30–M63 the composition is skewed to basic and acidic residues. Positions E64 to E89 are enriched in acidic residues. 2 stretches are compositionally biased toward basic and acidic residues: residues H115–E124 and P131–P140. Residues T172–P297 enclose the BAH domain. A disordered region spans residues S303–V323. The SAM-dependent MTase C5-type domain maps to A335 to E868. The Chromo domain occupies F437–L500. C513 is a catalytic residue.

This sequence belongs to the class I-like SAM-binding methyltransferase superfamily. C5-methyltransferase family.

It is found in the nucleus. It carries out the reaction a 2'-deoxycytidine in DNA + S-adenosyl-L-methionine = a 5-methyl-2'-deoxycytidine in DNA + S-adenosyl-L-homocysteine + H(+). Functionally, involved in CpXpG DNA methylation. Plays a critical role in the maintenance of CpXpG DNA methylation and suppression of a wide spectrum of transposable element (TE) activities. Required for proper plant development in reproductive stage. The protein is DNA (cytosine-5)-methyltransferase CMT3 of Oryza sativa subsp. japonica (Rice).